The sequence spans 838 residues: Axin-2 (838 aa).

A disordered region spans residues 1-75 (MSSAVLVTLL…EGRASPDSPL (75 aa)). The Tankyrase-binding motif signature appears at 21–30 (APRPPVPGEE). Polar residues predominate over residues 42-55 (KVQSTKPMPVSSNA). Over residues 56 to 69 (RRNEDGLGEPEGRA) the composition is skewed to basic and acidic residues. Residues 81–200 (SLHSLLGDQD…LTSDIYLEYV (120 aa)) enclose the RGS domain. Disordered stretches follow at residues 300 to 333 (SELS…KKQL), 398 to 435 (IRED…EEDP), 450 to 483 (PGCQ…LLPT), 568 to 682 (GSRG…AMPP), and 712 to 744 (VASQ…DHKE). Residues 303–318 (SSDALTDDSMSMTDSS) show a composition bias toward low complexity. The interval 327 to 413 (MGSKKQLQRE…KEGSEQALSS (87 aa)) is interaction with GSK3B. Residues 413-476 (SRDGAPVQHP…PDHHHHHHQQ (64 aa)) are interaction with beta-catenin. Positions 727–737 (AGPTSFSNPSL) are enriched in polar residues. The 83-residue stretch at 756-838 (ASELIVTYFF…RILGKVERID (83 aa)) folds into the DIX domain.

Interacts with SMAD7 and RNF111. Interacts with ANKRD6. Interacts with glycogen synthase kinase-3 beta (GSK3B) and beta-catenin. The interaction between axin and beta-catenin occurs via the armadillo repeats contained in beta-catenin. Interacts with SIAH1. Interacts with SIAH2. In terms of processing, ADP-ribosylated by tankyrase TNKS and TNKS2. Poly-ADP-ribosylated protein is recognized by RNF146, followed by ubiquitination and subsequent activation of the Wnt signaling pathway. Ubiquitinated by RNF146 when poly-ADP-ribosylated, leading to its degradation and subsequent activation of the Wnt signaling pathway. Deubiquitinated by USP34, deubiquitinated downstream of beta-catenin stabilization step: deubiquitination is important Wnt signaling to positively regulate beta-catenin (CTNBB1)-mediated transcription. Post-translationally, probably phosphorylated by GSK3B and dephosphorylated by PP2A. In terms of tissue distribution, expressed in lung and thymus.

The protein resides in the cytoplasm. Inhibitor of the Wnt signaling pathway. Down-regulates beta-catenin. Probably facilitate the phosphorylation of beta-catenin and APC by GSK3B. The protein is Axin-2 (Axin2) of Rattus norvegicus (Rat).